Here is a 399-residue protein sequence, read N- to C-terminus: Methylthioribose kinase (399 aa).

ATP is bound by residues Asn40, Lys57, and 111-113 (EDL). Residue Asp229 coordinates substrate. 246 to 248 (DAE) contributes to the ATP binding site. A substrate-binding site is contributed by Arg344.

The protein belongs to the methylthioribose kinase family. Homodimer.

The catalysed reaction is 5-(methylsulfanyl)-D-ribose + ATP = 5-(methylsulfanyl)-alpha-D-ribose 1-phosphate + ADP + H(+). It participates in amino-acid biosynthesis; L-methionine biosynthesis via salvage pathway; S-methyl-5-thio-alpha-D-ribose 1-phosphate from S-methyl-5'-thioadenosine (hydrolase route): step 2/2. In terms of biological role, catalyzes the phosphorylation of methylthioribose into methylthioribose-1-phosphate. The chain is Methylthioribose kinase from Erwinia tasmaniensis (strain DSM 17950 / CFBP 7177 / CIP 109463 / NCPPB 4357 / Et1/99).